Consider the following 461-residue polypeptide: Cysteine--tRNA ligase (461 aa).

Cys29 is a binding site for Zn(2+). Residues 31 to 41 (MTIYDLCHVGH) carry the 'HIGH' region motif. Positions 213, 238, and 242 each coordinate Zn(2+). Positions 274–278 (KMSKS) match the 'KMSKS' region motif. Residue Lys277 participates in ATP binding.

The protein belongs to the class-I aminoacyl-tRNA synthetase family. As to quaternary structure, monomer. The cofactor is Zn(2+).

It is found in the cytoplasm. The enzyme catalyses tRNA(Cys) + L-cysteine + ATP = L-cysteinyl-tRNA(Cys) + AMP + diphosphate. In Methylibium petroleiphilum (strain ATCC BAA-1232 / LMG 22953 / PM1), this protein is Cysteine--tRNA ligase.